Reading from the N-terminus, the 514-residue chain is Histidine ammonia-lyase (514 aa).

The segment at residues 142-144 is a cross-link (5-imidazolinone (Ala-Gly)); sequence ASG. A 2,3-didehydroalanine (Ser) modification is found at serine 143.

Belongs to the PAL/histidase family. Post-translationally, contains an active site 4-methylidene-imidazol-5-one (MIO), which is formed autocatalytically by cyclization and dehydration of residues Ala-Ser-Gly.

Its subcellular location is the cytoplasm. It carries out the reaction L-histidine = trans-urocanate + NH4(+). The protein operates within amino-acid degradation; L-histidine degradation into L-glutamate; N-formimidoyl-L-glutamate from L-histidine: step 1/3. This chain is Histidine ammonia-lyase, found in Sorangium cellulosum (strain So ce56) (Polyangium cellulosum (strain So ce56)).